The following is a 508-amino-acid chain: Photosystem II CP47 reaction center protein (508 aa).

A run of 6 helical transmembrane segments spans residues 21–36 (SVHI…WAGS), 101–115 (IVFS…IWHW), 140–156 (GIHL…FGAF), 203–218 (IAAG…FHLS), 237–252 (VLSS…AFVV), and 457–472 (TFAL…HGAR).

Belongs to the PsbB/PsbC family. PsbB subfamily. As to quaternary structure, PSII is composed of 1 copy each of membrane proteins PsbA, PsbB, PsbC, PsbD, PsbE, PsbF, PsbH, PsbI, PsbJ, PsbK, PsbL, PsbM, PsbT, PsbX, PsbY, PsbZ, Psb30/Ycf12, at least 3 peripheral proteins of the oxygen-evolving complex and a large number of cofactors. It forms dimeric complexes. Requires Binds multiple chlorophylls. PSII binds additional chlorophylls, carotenoids and specific lipids. as cofactor.

It is found in the plastid. Its subcellular location is the chloroplast thylakoid membrane. Functionally, one of the components of the core complex of photosystem II (PSII). It binds chlorophyll and helps catalyze the primary light-induced photochemical processes of PSII. PSII is a light-driven water:plastoquinone oxidoreductase, using light energy to abstract electrons from H(2)O, generating O(2) and a proton gradient subsequently used for ATP formation. The protein is Photosystem II CP47 reaction center protein of Drimys granadensis.